The following is a 401-amino-acid chain: Phosphoglycerate kinase 3, cytosolic (401 aa).

Val-24, Asp-25, Asn-27, Arg-41, Ser-63, His-64, Gly-66, Arg-67, Arg-122, His-154, and Arg-155 together coordinate (2R)-3-phosphoglycerate. Gly-200 contacts ADP. Gly-200 is a CDP binding site. Positions 202 and 206 each coordinate AMP. Position 206 (Lys-206) interacts with ATP. Residue Gly-224 participates in ADP binding. Gly-224 lines the CDP pocket. Gly-225 and Gly-297 together coordinate AMP. 3 residues coordinate ATP: Gly-225, Gly-297, and Asn-321. CDP contacts are provided by Gly-322 and Phe-327. Phe-327 lines the ADP pocket. An AMP-binding site is contributed by Glu-328. ATP-binding residues include Glu-328, Asp-359, and Ser-360. Residue Asp-359 coordinates Mg(2+).

It belongs to the phosphoglycerate kinase family. Monomer. Mg(2+) serves as cofactor. As to expression, expressed in roots, leaves and inflorescence.

The protein resides in the cytoplasm. The enzyme catalyses (2R)-3-phosphoglycerate + ATP = (2R)-3-phospho-glyceroyl phosphate + ADP. Its pathway is carbohydrate degradation; glycolysis; pyruvate from D-glyceraldehyde 3-phosphate: step 2/5. The sequence is that of Phosphoglycerate kinase 3, cytosolic from Arabidopsis thaliana (Mouse-ear cress).